Here is a 264-residue protein sequence, read N- to C-terminus: 3-methyl-2-oxobutanoate hydroxymethyltransferase (264 aa).

Mg(2+) is bound by residues aspartate 45 and aspartate 84. Residues 45-46, aspartate 84, and lysine 112 each bind 3-methyl-2-oxobutanoate; that span reads DS. Glutamate 114 contacts Mg(2+). Glutamate 181 (proton acceptor) is an active-site residue.

Belongs to the PanB family. Homodecamer; pentamer of dimers. Mg(2+) serves as cofactor.

The protein resides in the cytoplasm. The catalysed reaction is 3-methyl-2-oxobutanoate + (6R)-5,10-methylene-5,6,7,8-tetrahydrofolate + H2O = 2-dehydropantoate + (6S)-5,6,7,8-tetrahydrofolate. Its pathway is cofactor biosynthesis; (R)-pantothenate biosynthesis; (R)-pantoate from 3-methyl-2-oxobutanoate: step 1/2. Catalyzes the reversible reaction in which hydroxymethyl group from 5,10-methylenetetrahydrofolate is transferred onto alpha-ketoisovalerate to form ketopantoate. This chain is 3-methyl-2-oxobutanoate hydroxymethyltransferase, found in Colwellia psychrerythraea (strain 34H / ATCC BAA-681) (Vibrio psychroerythus).